A 422-amino-acid polypeptide reads, in one-letter code: MDKLRITGGSPLRGEVTVSGAKNAALPILCASLLTAEPLVLGNVPQLNDTSTTLRLLGRMGVRAERAGDGTVTLQADQVDNLEAPYELVKTMRASILVLGPLLARFGQARVSLPGGCAIGQRPVDQHIKGLAALGAEIEIEHGFVVARATRLKGASIRTDMVTVTGTENLLMAAVLAEGQTVLENAAREPEVVDLAELLIKMGARIQGHGTDRIVVDGVARLHGARHDVIADRIEAGTFLCAVGAAGGDITLRGAAPDTMGATLDKLVEAGLTIETGPDWIRGAMHGRPCAVGARTHEYPGFATDMQAQLMALDTVADGTAVIVENIFENRYMHVQELCRLGADIDIDGHTAVVRGVARLSGATVMATDLRASASLVIAGLAAEGETLVDRIYHLDRGYDRMEVKLRALGASIQRVTGKETA.

22–23 (KN) provides a ligand contact to phosphoenolpyruvate. Arg93 is a UDP-N-acetyl-alpha-D-glucosamine binding site. Cys117 serves as the catalytic Proton donor. Position 117 is a 2-(S-cysteinyl)pyruvic acid O-phosphothioketal (Cys117). UDP-N-acetyl-alpha-D-glucosamine contacts are provided by residues 122–126 (RPVDQ), Asp305, and Ile327.

This sequence belongs to the EPSP synthase family. MurA subfamily.

Its subcellular location is the cytoplasm. The catalysed reaction is phosphoenolpyruvate + UDP-N-acetyl-alpha-D-glucosamine = UDP-N-acetyl-3-O-(1-carboxyvinyl)-alpha-D-glucosamine + phosphate. The protein operates within cell wall biogenesis; peptidoglycan biosynthesis. Cell wall formation. Adds enolpyruvyl to UDP-N-acetylglucosamine. This is UDP-N-acetylglucosamine 1-carboxyvinyltransferase from Bordetella parapertussis (strain 12822 / ATCC BAA-587 / NCTC 13253).